A 251-amino-acid chain; its full sequence is Adenosylcobinamide-GDP ribazoletransferase (251 aa).

Helical transmembrane passes span 36–56 (LYPF…FVLS), 60–80 (VPIM…TGFL), 110–130 (VGAF…AGMF), 141–161 (ILIF…VSQE), 181–201 (EIIL…TLGI), 202–222 (NYLI…LKVK), and 231–251 (DVAG…LGII).

The protein belongs to the CobS family. Mg(2+) serves as cofactor.

The protein localises to the cell membrane. The catalysed reaction is alpha-ribazole + adenosylcob(III)inamide-GDP = adenosylcob(III)alamin + GMP + H(+). It carries out the reaction alpha-ribazole 5'-phosphate + adenosylcob(III)inamide-GDP = adenosylcob(III)alamin 5'-phosphate + GMP + H(+). The protein operates within cofactor biosynthesis; adenosylcobalamin biosynthesis; adenosylcobalamin from cob(II)yrinate a,c-diamide: step 7/7. Functionally, joins adenosylcobinamide-GDP and alpha-ribazole to generate adenosylcobalamin (Ado-cobalamin). Also synthesizes adenosylcobalamin 5'-phosphate from adenosylcobinamide-GDP and alpha-ribazole 5'-phosphate. This is Adenosylcobinamide-GDP ribazoletransferase from Clostridium perfringens (strain ATCC 13124 / DSM 756 / JCM 1290 / NCIMB 6125 / NCTC 8237 / Type A).